The sequence spans 284 residues: Cytosolic Fe-S cluster assembly factor NUBP2 homolog (284 aa).

27–34 (GKGGVGKS) is an ATP binding site. Positions 200 and 203 each coordinate [4Fe-4S] cluster.

It belongs to the Mrp/NBP35 ATP-binding proteins family. NUBP2/CFD1 subfamily. In terms of assembly, heterotetramer of 2 NUBP1 and 2 NUBP2 chains. The cofactor is [4Fe-4S] cluster.

The protein localises to the cytoplasm. Its function is as follows. Component of the cytosolic iron-sulfur (Fe/S) protein assembly (CIA) machinery. Required for maturation of extramitochondrial Fe-S proteins. The NUBP1-NUBP2 heterotetramer forms a Fe-S scaffold complex, mediating the de novo assembly of an Fe-S cluster and its transfer to target apoproteins. The protein is Cytosolic Fe-S cluster assembly factor NUBP2 homolog of Monosiga brevicollis (Choanoflagellate).